Consider the following 272-residue polypeptide: MSVVSLLGVRVLNNPAAFTAPYEFEITFECLEQLQKDLEWKLTYVGSATSSEYDQELDSLLVGPIPVGVNKFIFEADPPDLKRIPTSEILGVTVILLTCSYDGREFVRVGYYVNNEYDSEELNKEPPTKPIIERVRRNVLAEKPRVTRFHIKWDTDSDPTEFPPVQPDADVLEDDGETYGAEELELEAALKRELEELDSQDADKMDVGEGRDDVDDNESDAGSEDLEGETSGSDDEEEEEGFEGEDEDVEMGDDSNPTPDQHQHPNPEVMVH.

2 disordered regions span residues 152–173 (KWDT…DVLE) and 195–272 (EELD…VMVH). Residues 181–206 (AEELELEAALKRELEELDSQDADKMD) adopt a coiled-coil conformation. Over residues 201-211 (DADKMDVGEGR) the composition is skewed to basic and acidic residues. Residues 212 to 253 (DDVDDNESDAGSEDLEGETSGSDDEEEEEGFEGEDEDVEMGD) are compositionally biased toward acidic residues. Basic and acidic residues predominate over residues 261 to 272 (QHQHPNPEVMVH).

It belongs to the ASF1 family. In terms of assembly, interacts with histone H3 and histone H4.

The protein localises to the nucleus. Functionally, histone chaperone that facilitates histone deposition and histone exchange and removal during nucleosome assembly and disassembly. The chain is Histone chaperone ASF1 (ASF1) from Coccidioides immitis (strain RS) (Valley fever fungus).